A 328-amino-acid polypeptide reads, in one-letter code: MKKVNVVAIGGGTGLSSLLRGLKIEVGRSIGRLSAIVTVADSGGSTGRLRKIYNIPAPGDIRNCIVALSDAEELMQKLFQYRFKGDGLEGHAFGNLFLTALTDITGSFLKAIKETSKILKTKGDIIPSTYENVNLVAEFDDGKVIKGEEEITEYGKKGHKVVNIWLEPKNPKAPEEAIERIKEADLIIIGPGSLFTSILPNFLVPQIREAVKESRALKVFVVNVMTQPGETDNFTAWDHIDTFLKFSGIDLVDVAVVNTQMPSNGLLKKYLEQNQEPVTPDVGRIGREGITVYAENLIGESGDFVRHDPQKLTEVILKILENELLSKV.

The protein belongs to the gluconeogenesis factor family.

It localises to the cytoplasm. Required for morphogenesis under gluconeogenic growth conditions. This is Putative gluconeogenesis factor from Aquifex aeolicus (strain VF5).